The following is a 550-amino-acid chain: Thermosome subunit (550 aa).

A disordered region spans residues 529–550 (KEKEGEKGGGGSEDFSSSSDLD). Residues 541 to 550 (EDFSSSSDLD) are compositionally biased toward low complexity.

This sequence belongs to the TCP-1 chaperonin family. Forms an oligomeric complex of eight-membered rings.

In terms of biological role, molecular chaperone; binds unfolded polypeptides in vitro, and has a weak ATPase activity. The polypeptide is Thermosome subunit (ths) (Pyrococcus abyssi (strain GE5 / Orsay)).